Consider the following 334-residue polypeptide: DnaJ protein homolog 1 (334 aa).

One can recognise a J domain in the interval 4–68 (DFYKILGLER…KKRDIFDNYG (65 aa)). Ser-187 carries the phosphoserine modification.

Its subcellular location is the cytoplasm. The chain is DnaJ protein homolog 1 (DnaJ-1) from Drosophila melanogaster (Fruit fly).